The primary structure comprises 1196 residues: Nucleolar protein 6 (1196 aa).

Disordered regions lie at residues Met-1–Pro-74 and Lys-1140–Lys-1196. 2 stretches are compositionally biased toward basic and acidic residues: residues His-22–His-31 and His-65–Pro-74. Over residues Lys-1165–Ile-1187 the composition is skewed to basic residues.

The protein belongs to the NRAP family. Part of the small subunit (SSU) processome, composed of more than 70 proteins and the RNA chaperone small nucleolar RNA (snoRNA) U3.

Its subcellular location is the nucleus. The protein resides in the nucleolus. It localises to the chromosome. Part of the small subunit (SSU) processome, first precursor of the small eukaryotic ribosomal subunit. During the assembly of the SSU processome in the nucleolus, many ribosome biogenesis factors, an RNA chaperone and ribosomal proteins associate with the nascent pre-rRNA and work in concert to generate RNA folding, modifications, rearrangements and cleavage as well as targeted degradation of pre-ribosomal RNA by the RNA exosome. In Drosophila simulans (Fruit fly), this protein is Nucleolar protein 6.